The chain runs to 163 residues: ADP-ribosylation factor-like protein 2-binding protein (163 aa).

It belongs to the ARL2BP family. In terms of assembly, interacts with GTP bound ARL2 and ARL3; the complex ARL2-ARL2BP as well as ARL2BP alone, binds to SLC25A4/ANT1. Interaction with ARL2 may be required for cilia basal body localization. Interacts with STAT3; interaction is enhanced with ARL2. Found in a complex with ARL2BP, ARL2 and SLC25A6. Found in a complex with ARL2, ARL2BP and SLC25A4. Interacts with STAT2, STAT3 and STAT4.

It localises to the cytoplasm. It is found in the mitochondrion intermembrane space. The protein resides in the cytoskeleton. The protein localises to the microtubule organizing center. Its subcellular location is the centrosome. It localises to the nucleus. It is found in the spindle. The protein resides in the cilium basal body. Functionally, together with ARL2, plays a role in the nuclear translocation, retention and transcriptional activity of STAT3. May play a role as an effector of ARL2. This Pongo abelii (Sumatran orangutan) protein is ADP-ribosylation factor-like protein 2-binding protein (ARL2BP).